Here is a 547-residue protein sequence, read N- to C-terminus: Chaperonin GroEL 1 (547 aa).

ATP-binding positions include 30-33 (TLGP), Lys51, 87-91 (DGTTT), Gly415, and Asp495.

It belongs to the chaperonin (HSP60) family. Forms a cylinder of 14 subunits composed of two heptameric rings stacked back-to-back. Interacts with the co-chaperonin GroES.

Its subcellular location is the cytoplasm. It catalyses the reaction ATP + H2O + a folded polypeptide = ADP + phosphate + an unfolded polypeptide.. Its function is as follows. Together with its co-chaperonin GroES, plays an essential role in assisting protein folding. The GroEL-GroES system forms a nano-cage that allows encapsulation of the non-native substrate proteins and provides a physical environment optimized to promote and accelerate protein folding. The chain is Chaperonin GroEL 1 from Azorhizobium caulinodans (strain ATCC 43989 / DSM 5975 / JCM 20966 / LMG 6465 / NBRC 14845 / NCIMB 13405 / ORS 571).